We begin with the raw amino-acid sequence, 276 residues long: Undecaprenyl-diphosphatase (276 aa).

The next 5 membrane-spanning stretches (helical) occupy residues 85–105 (MNVV…EKTI), 108–128 (VLFA…AILW), 187–207 (VATE…TLYE), 217–237 (VDSV…AFAC), and 253–273 (FAWY…SGWI).

It belongs to the UppP family.

Its subcellular location is the cell inner membrane. It carries out the reaction di-trans,octa-cis-undecaprenyl diphosphate + H2O = di-trans,octa-cis-undecaprenyl phosphate + phosphate + H(+). Functionally, catalyzes the dephosphorylation of undecaprenyl diphosphate (UPP). Confers resistance to bacitracin. The polypeptide is Undecaprenyl-diphosphatase (Burkholderia mallei (strain NCTC 10247)).